The primary structure comprises 266 residues: Type 1 encapsulin shell protein (266 aa).

The protein belongs to the encapsulin family. Family 1 subfamily. As to quaternary structure, this encapsulin nanocompartment is formed by 60 subunits; monomers form 12 pentamers which assemble to form shells. Shells are loaded with 4 encapsulated ferritin-like protein decamers (EncFtn) in a tetrahedral arrangement. A 3 nm gap is consistently seen between the shell and the cargo.

The protein resides in the encapsulin nanocompartment. Its function is as follows. Shell component of a type 1 encapsulin nanocompartment. Assembles into proteinaceous shells about 21 nm in diameter. Small pores form at, or close to, the 2-, 3-, and 5-fold symmetry axes. Data analysis suggests the 5-fold pores open and close with maximal and minimal aperatures of 15 and 5 Angstroms. Cargo protein Fer (ferritin-like protein, probably stores iron) is targeted to the interior via its C-terminal extension; empty intact shells can be isolated in the absence of cargo protein. This Haliangium ochraceum (strain DSM 14365 / JCM 11303 / SMP-2) protein is Type 1 encapsulin shell protein.